A 396-amino-acid chain; its full sequence is Na(+)/H(+) antiporter NhaA (396 aa).

11 consecutive transmembrane segments (helical) span residues 14–34 (ASGIILIMAAVLAMILANSGL), 59–79 (LLLWINDGFMAIFFLLVGLEV), 95–115 (TFPAIAAVGGMLAPALIYTFF), 124–144 (AGWAIPAATDIAFALGVMALL), 154–174 (VFLLALAIMDDLGVIIIIALF), 178–198 (QLSLEALAVGILATLTLLWMN), 205–225 (IGLYMLVGLVLWVAVLKSGVH), 254–274 (ALHPWSAYLILPLFAFANAGV), 278–298 (GIGLSSLLSPVPMGIMLGLFV), 328–348 (IFAVSILCGIGFTMSMFIASL), and 363–383 (LGILVGSTLAAVVGYLALRMS).

Belongs to the NhaA Na(+)/H(+) (TC 2.A.33) antiporter family.

It localises to the cell inner membrane. The catalysed reaction is Na(+)(in) + 2 H(+)(out) = Na(+)(out) + 2 H(+)(in). Its function is as follows. Na(+)/H(+) antiporter that extrudes sodium in exchange for external protons. This is Na(+)/H(+) antiporter NhaA from Aeromonas salmonicida (strain A449).